The chain runs to 178 residues: Large ribosomal subunit protein uL10 (178 aa).

This sequence belongs to the universal ribosomal protein uL10 family. In terms of assembly, part of the ribosomal stalk of the 50S ribosomal subunit. The N-terminus interacts with L11 and the large rRNA to form the base of the stalk. The C-terminus forms an elongated spine to which L12 dimers bind in a sequential fashion forming a multimeric L10(L12)X complex.

Forms part of the ribosomal stalk, playing a central role in the interaction of the ribosome with GTP-bound translation factors. In Thermosynechococcus vestitus (strain NIES-2133 / IAM M-273 / BP-1), this protein is Large ribosomal subunit protein uL10.